Reading from the N-terminus, the 798-residue chain is RNA cytosine-C(5)-methyltransferase NSUN2 (798 aa).

The span at 1–13 (MGRRNRRNRQRHQ) shows a compositional bias: basic residues. The interval 1-30 (MGRRNRRNRQRHQRSTEQRSPAEEEQRRKA) is disordered. The segment covering 14 to 30 (RSTEQRSPAEEEQRRKA) has biased composition (basic and acidic residues). S-adenosyl-L-methionine contacts are provided by residues 186–192 (CAAPGSK), Asp217, Asp244, and Asp270. Cys323 (nucleophile) is an active-site residue. Disordered stretches follow at residues 476–499 (DEPA…SSKT) and 723–798 (KACD…ESVD). Residues 723–747 (KACDEEHIDEKMDIDGAKEESKELS) show a composition bias toward basic and acidic residues. Residues 751-762 (SGDDEDPKEEDV) are compositionally biased toward acidic residues. A compositionally biased stretch (basic and acidic residues) spans 763 to 772 (IDRGVLEHVA).

Belongs to the class I-like SAM-binding methyltransferase superfamily. RsmB/NOP family. TRM4 subfamily.

It localises to the nucleus. It is found in the nucleolus. The protein resides in the cytoplasm. The protein localises to the mitochondrion. Its subcellular location is the cytoskeleton. It localises to the spindle. It is found in the secreted. The protein resides in the extracellular exosome. The catalysed reaction is cytidine(48) in tRNA + S-adenosyl-L-methionine = 5-methylcytidine(48) in tRNA + S-adenosyl-L-homocysteine + H(+). It catalyses the reaction cytidine(49) in tRNA + S-adenosyl-L-methionine = 5-methylcytidine(49) in tRNA + S-adenosyl-L-homocysteine + H(+). The enzyme catalyses cytidine(50) in tRNA + S-adenosyl-L-methionine = 5-methylcytidine(50) in tRNA + S-adenosyl-L-homocysteine + H(+). It carries out the reaction cytidine(34) in tRNA precursor + S-adenosyl-L-methionine = 5-methylcytidine(34) in tRNA precursor + S-adenosyl-L-homocysteine + H(+). The catalysed reaction is a cytidine in mRNA + S-adenosyl-L-methionine = a 5-methylcytidine in mRNA + S-adenosyl-L-homocysteine + H(+). Functionally, RNA cytosine C(5)-methyltransferase that methylates cytosine to 5-methylcytosine (m5C) in various RNAs, such as tRNAs, mRNAs and some long non-coding RNAs (lncRNAs). Involved in various processes, such as epidermal stem cell differentiation, testis differentiation and maternal to zygotic transition during early development: acts by increasing protein synthesis; cytosine C(5)-methylation promoting tRNA stability and preventing mRNA decay. Methylates cytosine to 5-methylcytosine (m5C) at positions 34 and 48 of intron-containing tRNA(Leu)(CAA) precursors, and at positions 48, 49 and 50 of tRNA(Gly)(GCC) precursors. tRNA methylation is required generation of RNA fragments derived from tRNAs (tRFs). Also mediates C(5)-methylation of mitochondrial tRNAs. Catalyzes cytosine C(5)-methylation of mRNAs, leading to stabilize them and prevent mRNA decay. Cytosine C(5)-methylation of mRNAs also regulates mRNA export. Also mediates cytosine C(5)-methylation of non-coding RNAs, such as vault RNAs (vtRNAs), promoting their processing into regulatory small RNAs. Required for proper spindle assembly and chromosome segregation, independently of its methyltransferase activity. This Xenopus tropicalis (Western clawed frog) protein is RNA cytosine-C(5)-methyltransferase NSUN2.